The following is a 350-amino-acid chain: S-adenosylmethionine:tRNA ribosyltransferase-isomerase (350 aa).

This sequence belongs to the QueA family. As to quaternary structure, monomer.

The protein localises to the cytoplasm. It catalyses the reaction 7-aminomethyl-7-carbaguanosine(34) in tRNA + S-adenosyl-L-methionine = epoxyqueuosine(34) in tRNA + adenine + L-methionine + 2 H(+). The protein operates within tRNA modification; tRNA-queuosine biosynthesis. Its function is as follows. Transfers and isomerizes the ribose moiety from AdoMet to the 7-aminomethyl group of 7-deazaguanine (preQ1-tRNA) to give epoxyqueuosine (oQ-tRNA). This chain is S-adenosylmethionine:tRNA ribosyltransferase-isomerase, found in Aliivibrio fischeri (strain MJ11) (Vibrio fischeri).